A 583-amino-acid polypeptide reads, in one-letter code: MSEKLDRESILYKKRHSIAHVMAEAVLELFPNTKIAIGPPIKDGFYYDFDFEKHITEDDLLLIEQKMREILKTGSPFVKEVITKEQALMLFKDEPYKMDLIRGLAITDEISIYKSHNFTDLCKGPHVDNMGKIDPKAFKLTSIAGAYWRGDEKNKMLTRIYGTLWNNEKDLKAYLKLREEIKRRDHRKLGRELDLFSVHEDIGPGLIFFHPNGARIRAIIEDFWREEHFKNGYDVLFTPHIGKSCLWETSGHLDFYKESMFEKMEMDKSNYYVKPMNCPFHIAIYNTGKHSYRDLPFRWAELGTVYRYEKIGALHGTMRVRGFTQDDAHIICAYEQVKSEVQEVLRFALYMWNQFGFADLKAYLSTKPEKAVGDKDDWEMSVKVLEEALIDLNIAYDIDEGGGAFYGPKIDLKIIDSLGREWQMSTIQFDFNLPERFKMTYTAEDGKEKRPFMIHRALLGSIERFFGILVEHYGGAFPVWLAPLQVIIIPVNNVVEEYALEILSLFKNEGIRIKLDNDCNMRMNAKIRQYQSKKVPYMFIIGEKEVVEGKISIRTRTNDQINGLELKEALEFVRLKVKNKEIL.

A catalytic region spans residues 185 to 478 (DHRKLGRELD…LVEHYGGAFP (294 aa)). Zn(2+) contacts are provided by C278, H329, and H455.

Belongs to the class-II aminoacyl-tRNA synthetase family. As to quaternary structure, homodimer. Zn(2+) is required as a cofactor.

Its subcellular location is the cytoplasm. The enzyme catalyses tRNA(Thr) + L-threonine + ATP = L-threonyl-tRNA(Thr) + AMP + diphosphate + H(+). Its function is as follows. Catalyzes the attachment of threonine to tRNA(Thr) in a two-step reaction: L-threonine is first activated by ATP to form Thr-AMP and then transferred to the acceptor end of tRNA(Thr). Also edits incorrectly charged L-seryl-tRNA(Thr). This chain is Threonine--tRNA ligase, found in Borrelia hermsii (strain HS1 / DAH).